Here is a 650-residue protein sequence, read N- to C-terminus: DNA ligase (650 aa).

NAD(+) contacts are provided by residues 30–34 (DEQYD) and 79–80 (SL). Lysine 110 functions as the N6-AMP-lysine intermediate in the catalytic mechanism. NAD(+) is bound by residues arginine 131, glutamate 165, and lysine 304. The Zn(2+) site is built by cysteine 398, cysteine 401, cysteine 414, and cysteine 419. The BRCT domain maps to 573 to 650 (DNNNVFFNKT…EEEFLAQINK (78 aa)).

It belongs to the NAD-dependent DNA ligase family. LigA subfamily. Mg(2+) serves as cofactor. Requires Mn(2+) as cofactor.

The enzyme catalyses NAD(+) + (deoxyribonucleotide)n-3'-hydroxyl + 5'-phospho-(deoxyribonucleotide)m = (deoxyribonucleotide)n+m + AMP + beta-nicotinamide D-nucleotide.. Its function is as follows. DNA ligase that catalyzes the formation of phosphodiester linkages between 5'-phosphoryl and 3'-hydroxyl groups in double-stranded DNA using NAD as a coenzyme and as the energy source for the reaction. It is essential for DNA replication and repair of damaged DNA. The protein is DNA ligase of Helicobacter hepaticus (strain ATCC 51449 / 3B1).